The primary structure comprises 310 residues: Methionyl-tRNA formyltransferase (310 aa).

Residue 109–112 coordinates (6S)-5,6,7,8-tetrahydrofolate; that stretch reads SLLP.

Belongs to the Fmt family.

It carries out the reaction L-methionyl-tRNA(fMet) + (6R)-10-formyltetrahydrofolate = N-formyl-L-methionyl-tRNA(fMet) + (6S)-5,6,7,8-tetrahydrofolate + H(+). Attaches a formyl group to the free amino group of methionyl-tRNA(fMet). The formyl group appears to play a dual role in the initiator identity of N-formylmethionyl-tRNA by promoting its recognition by IF2 and preventing the misappropriation of this tRNA by the elongation apparatus. In Pseudomonas putida (strain ATCC 700007 / DSM 6899 / JCM 31910 / BCRC 17059 / LMG 24140 / F1), this protein is Methionyl-tRNA formyltransferase.